Here is a 419-residue protein sequence, read N- to C-terminus: Carboxypeptidase A1 (419 aa).

A signal peptide spans 1–16 (MKRLLVLSVLLAAVFG). The propeptide at 17-110 (NENFVGHQVL…KQQMSAFQAR (94 aa)) is activation peptide. Residues 121–414 (TYHTLDEIYE…LALLTIMDHT (294 aa)) enclose the Peptidase M14 domain. The Zn(2+) site is built by His-179 and Glu-182. Residues 179–182 (HSRE), Arg-237, and 254–255 (NR) contribute to the substrate site. Cysteines 248 and 271 form a disulfide. Residue His-306 coordinates Zn(2+). Residues 307–308 (SY) and Tyr-358 each bind substrate. The active-site Proton donor/acceptor is the Glu-380.

The protein belongs to the peptidase M14 family. Monomer. It depends on Zn(2+) as a cofactor.

The protein localises to the secreted. The enzyme catalyses Release of a C-terminal amino acid, but little or no action with -Asp, -Glu, -Arg, -Lys or -Pro.. Functionally, carboxypeptidase that catalyzes the release of a C-terminal amino acid, but has little or no action with -Asp, -Glu, -Arg, -Lys or -Pro. The chain is Carboxypeptidase A1 (Cpa1) from Mus musculus (Mouse).